We begin with the raw amino-acid sequence, 323 residues long: Putative HTH-type transcriptional regulatory protein Mbur_1811 (323 aa).

The HTH cro/C1-type domain occupies 132–190 (LKEARMNVSMSLGALASELGVSRRTISKYEEGQMDASIDIVLHLEEILDMALAKSIDIL). A DNA-binding region (H-T-H motif) is located at residues 143 to 162 (LGALASELGVSRRTISKYEE).

This is Putative HTH-type transcriptional regulatory protein Mbur_1811 from Methanococcoides burtonii (strain DSM 6242 / NBRC 107633 / OCM 468 / ACE-M).